The chain runs to 274 residues: MEIKMAKDYGFCFGVKRAIQIAEKNQNSLIFGSLIHNAKEINRLEKNFNVKIEEDPKKIPKNKSVIIRTHGIPKQDLEYLKNKGVKITDATCPYVIKPQQIVESMSKEGYQIVLFGDINHPEVKGVISYATNQALVVNSLEELQEKKLQRKVALVSQTTKQTPKLLQIASYLVERCTEVRIFNTICNATSYNQKAALDLSKEVDIMIVVGGKTSSNTKQLLSIAKQHCKDSYLVEDENELELAWFKDKKLCGITAGASTPDWIIENVKQKISTI.

Residue Cys12 participates in [4Fe-4S] cluster binding. Residues His36 and His70 each coordinate (2E)-4-hydroxy-3-methylbut-2-enyl diphosphate. The dimethylallyl diphosphate site is built by His36 and His70. His36 and His70 together coordinate isopentenyl diphosphate. Residue Cys92 participates in [4Fe-4S] cluster binding. His120 is a (2E)-4-hydroxy-3-methylbut-2-enyl diphosphate binding site. His120 lines the dimethylallyl diphosphate pocket. His120 is an isopentenyl diphosphate binding site. Residue Glu122 is the Proton donor of the active site. A (2E)-4-hydroxy-3-methylbut-2-enyl diphosphate-binding site is contributed by Thr158. Residue Cys186 coordinates [4Fe-4S] cluster. (2E)-4-hydroxy-3-methylbut-2-enyl diphosphate is bound by residues Ser214, Ser215, Asn216, and Ser258. The dimethylallyl diphosphate site is built by Ser214, Ser215, Asn216, and Ser258. Isopentenyl diphosphate is bound by residues Ser214, Ser215, Asn216, and Ser258.

This sequence belongs to the IspH family. It depends on [4Fe-4S] cluster as a cofactor.

It carries out the reaction isopentenyl diphosphate + 2 oxidized [2Fe-2S]-[ferredoxin] + H2O = (2E)-4-hydroxy-3-methylbut-2-enyl diphosphate + 2 reduced [2Fe-2S]-[ferredoxin] + 2 H(+). The catalysed reaction is dimethylallyl diphosphate + 2 oxidized [2Fe-2S]-[ferredoxin] + H2O = (2E)-4-hydroxy-3-methylbut-2-enyl diphosphate + 2 reduced [2Fe-2S]-[ferredoxin] + 2 H(+). Its pathway is isoprenoid biosynthesis; dimethylallyl diphosphate biosynthesis; dimethylallyl diphosphate from (2E)-4-hydroxy-3-methylbutenyl diphosphate: step 1/1. It participates in isoprenoid biosynthesis; isopentenyl diphosphate biosynthesis via DXP pathway; isopentenyl diphosphate from 1-deoxy-D-xylulose 5-phosphate: step 6/6. In terms of biological role, catalyzes the conversion of 1-hydroxy-2-methyl-2-(E)-butenyl 4-diphosphate (HMBPP) into a mixture of isopentenyl diphosphate (IPP) and dimethylallyl diphosphate (DMAPP). Acts in the terminal step of the DOXP/MEP pathway for isoprenoid precursor biosynthesis. This Helicobacter pylori (strain P12) protein is 4-hydroxy-3-methylbut-2-enyl diphosphate reductase.